We begin with the raw amino-acid sequence, 444 residues long: Methylenetetrahydrofolate--tRNA-(uracil-5-)-methyltransferase TrmFO (444 aa).

10–15 lines the FAD pocket; the sequence is GAGLAG.

This sequence belongs to the MnmG family. TrmFO subfamily. FAD is required as a cofactor.

The protein localises to the cytoplasm. It catalyses the reaction uridine(54) in tRNA + (6R)-5,10-methylene-5,6,7,8-tetrahydrofolate + NADH + H(+) = 5-methyluridine(54) in tRNA + (6S)-5,6,7,8-tetrahydrofolate + NAD(+). The catalysed reaction is uridine(54) in tRNA + (6R)-5,10-methylene-5,6,7,8-tetrahydrofolate + NADPH + H(+) = 5-methyluridine(54) in tRNA + (6S)-5,6,7,8-tetrahydrofolate + NADP(+). Catalyzes the folate-dependent formation of 5-methyl-uridine at position 54 (M-5-U54) in all tRNAs. The polypeptide is Methylenetetrahydrofolate--tRNA-(uracil-5-)-methyltransferase TrmFO (Streptococcus mutans serotype c (strain ATCC 700610 / UA159)).